A 322-amino-acid chain; its full sequence is Eukaryotic translation initiation factor 3 subunit I (322 aa).

WD repeat units follow at residues 4–43 (GHERSITQIKYNREGDLLFSSSKDQKPNVWYSLNGERLGT), 46–85 (GHQGAVWCLDVDWESRKLITAGGDMTAKLWDVEYGTVIAS), 141–180 (MTESKITSMLWGPLDETIITGHDNGNIAIWDVRKGQKVVD), 184–223 (DHTGVINDMQLSKDGTMFVTASKDATAKLFDSETLMCLKT), and 281–322 (GHFG…NIFE).

The protein belongs to the eIF-3 subunit I family. In terms of assembly, component of the eukaryotic translation initiation factor 3 (eIF-3) complex. The eIF-3 complex interacts with pix.

It localises to the cytoplasm. Functionally, component of the eukaryotic translation initiation factor 3 (eIF-3) complex, which is involved in protein synthesis of a specialized repertoire of mRNAs and, together with other initiation factors, stimulates binding of mRNA and methionyl-tRNAi to the 40S ribosome. The eIF-3 complex specifically targets and initiates translation of a subset of mRNAs involved in cell proliferation. The chain is Eukaryotic translation initiation factor 3 subunit I from Drosophila willistoni (Fruit fly).